Here is a 279-residue protein sequence, read N- to C-terminus: Movement protein (279 aa).

The disordered stretch occupies residues 246–279; it reads SESEDLNVESPPAAIGSSSASRSEAFRPQVVNGL. Residues 254-268 are compositionally biased toward low complexity; that stretch reads ESPPAAIGSSSASRS.

Belongs to the cucumovirus movement protein family.

It is found in the host cell junction. Its subcellular location is the host plasmodesma. Its function is as follows. Transports viral genome to neighboring plant cells directly through plasmosdesmata, without any budding. The movement protein allows efficient cell to cell propagation, by bypassing the host cell wall barrier. Acts by forming a tubular structure at the host plasmodesmata, enlarging it enough to allow free passage of virion capsids. The chain is Movement protein from Cucurbita pepo (Vegetable marrow).